A 786-amino-acid chain; its full sequence is UPF0313 protein SO_0311 (786 aa).

Positions alanine 371–alanine 649 constitute a Radical SAM core domain. Positions 385, 389, and 392 each coordinate [4Fe-4S] cluster. Disordered stretches follow at residues asparagine 669–methionine 688 and leucine 698–lysine 786. Composition is skewed to basic and acidic residues over residues glycine 679–methionine 688 and phenylalanine 706–glycine 717. Low complexity predominate over residues lysine 718 to alanine 731. A compositionally biased stretch (polar residues) spans asparagine 732–threonine 741.

Belongs to the UPF0313 family. Requires [4Fe-4S] cluster as cofactor.

This is UPF0313 protein SO_0311 from Shewanella oneidensis (strain ATCC 700550 / JCM 31522 / CIP 106686 / LMG 19005 / NCIMB 14063 / MR-1).